The following is a 144-amino-acid chain: Transcriptional regulator MraZ (144 aa).

SpoVT-AbrB domains lie at 5–50 (TFNH…ALPQ) and 81–124 (AHEV…DRAA).

Belongs to the MraZ family. Forms oligomers.

The protein resides in the cytoplasm. Its subcellular location is the nucleoid. This Anaeromyxobacter dehalogenans (strain 2CP-C) protein is Transcriptional regulator MraZ.